Here is a 488-residue protein sequence, read N- to C-terminus: Ribulose bisphosphate carboxylase large chain (488 aa).

Positions 127 and 177 each coordinate substrate. Lysine 179 functions as the Proton acceptor in the catalytic mechanism. Lysine 181 contacts substrate. Mg(2+)-binding residues include lysine 205, aspartate 207, and glutamate 208. Lysine 205 is subject to N6-carboxylysine. Catalysis depends on histidine 297, which acts as the Proton acceptor. The substrate site is built by arginine 298, histidine 330, and serine 382.

The protein belongs to the RuBisCO large chain family. Type I subfamily. In terms of assembly, heterohexadecamer of 8 large chains and 8 small chains. Mg(2+) is required as a cofactor.

Its subcellular location is the plastid. It is found in the chloroplast. The enzyme catalyses 2 (2R)-3-phosphoglycerate + 2 H(+) = D-ribulose 1,5-bisphosphate + CO2 + H2O. It carries out the reaction D-ribulose 1,5-bisphosphate + O2 = 2-phosphoglycolate + (2R)-3-phosphoglycerate + 2 H(+). Functionally, ruBisCO catalyzes two reactions: the carboxylation of D-ribulose 1,5-bisphosphate, the primary event in carbon dioxide fixation, as well as the oxidative fragmentation of the pentose substrate in the photorespiration process. Both reactions occur simultaneously and in competition at the same active site. The sequence is that of Ribulose bisphosphate carboxylase large chain from Cyanidioschyzon merolae (strain NIES-3377 / 10D) (Unicellular red alga).